We begin with the raw amino-acid sequence, 141 residues long: Large ribosomal subunit protein uL13 (141 aa).

Belongs to the universal ribosomal protein uL13 family. As to quaternary structure, part of the 50S ribosomal subunit.

This protein is one of the early assembly proteins of the 50S ribosomal subunit, although it is not seen to bind rRNA by itself. It is important during the early stages of 50S assembly. The polypeptide is Large ribosomal subunit protein uL13 (Helicobacter pylori (strain P12)).